Consider the following 912-residue polypeptide: Intercellular adhesion molecule 5 (912 aa).

A signal peptide spans 1-29 (MPGPSPGLRALLGFWVALGLGILRLSAVA). Residues 30–826 (QEPFWADLQP…RITVRVAGPW (797 aa)) lie on the Extracellular side of the membrane. Ig-like C2-type domains are found at residues 47 to 127 (GGSL…PLPP), 132 to 232 (GENF…RLLA), 239 to 324 (DSQS…LLTL), 332 to 395 (GKLV…NGSA), 403 to 481 (PRLD…VTLT), 486 to 561 (PALD…VAVT), 566 to 645 (PSFE…NPLG), 659 to 734 (PQMD…TVGV), and 738 to 819 (PVVA…RRIT). N-linked (GlcNAc...) (high mannose) asparagine glycosylation is present at asparagine 53. Cystine bridges form between cysteine 54–cysteine 97 and cysteine 58–cysteine 101. Asparagine 134 is a glycosylation site (N-linked (GlcNAc...) asparagine). A disulfide bridge connects residues cysteine 139 and cysteine 195. 2 positions are modified to phosphothreonine: threonine 179 and threonine 181. N-linked (GlcNAc...) asparagine glycosylation is found at asparagine 192 and asparagine 211. A disulfide bridge links cysteine 246 with cysteine 297. Residues asparagine 311, asparagine 366, and asparagine 392 are each glycosylated (N-linked (GlcNAc...) asparagine). Cysteines 339 and 378 form a disulfide. 3 cysteine pairs are disulfide-bonded: cysteine 410/cysteine 465, cysteine 493/cysteine 546, and cysteine 573/cysteine 638. Asparagine 576 and asparagine 639 each carry an N-linked (GlcNAc...) asparagine glycan. A disulfide bond links cysteine 666 and cysteine 717. The tract at residues 678 to 708 (AAGPACARGRPSPRVRCSREGAPRPARPRVS) is disordered. Residues asparagine 756, asparagine 787, and asparagine 788 are each glycosylated (N-linked (GlcNAc...) asparagine). Cysteines 761 and 806 form a disulfide. A helical membrane pass occupies residues 827–847 (LWIAVGGAVGGAVLLAAGAGL). Topologically, residues 848 to 912 (AFYVQSTACK…EVFAIQLTSA (65 aa)) are cytoplasmic. Positions 880 to 902 (GGAGSGAEGGPEAEDSAESPAGG) are disordered.

It belongs to the immunoglobulin superfamily. ICAM family. In terms of processing, glycosylation at Asn-53 is critical for functional folding. As to expression, expressed on neurons in the most rostral segment of the mammalian brain, the telencephalon.

Its subcellular location is the membrane. ICAM proteins are ligands for the leukocyte adhesion protein LFA-1 (integrin alpha-L/beta-2). The chain is Intercellular adhesion molecule 5 (ICAM5) from Oryctolagus cuniculus (Rabbit).